The primary structure comprises 146 residues: Hemoglobin subunit beta (146 aa).

Val1 carries the post-translational modification N-acetylvaline; partial. The Globin domain occupies 2–146 (HLTDAEKAAV…VANALAHKYH (145 aa)). Position 12 is a phosphothreonine (Thr12). Lys59 is subject to N6-acetyllysine. Position 63 (His63) interacts with heme b. Lys82 is subject to N6-acetyllysine. His92 is a heme b binding site. Cys93 bears the S-nitrosocysteine mark. At Lys144 the chain carries N6-acetyllysine.

This sequence belongs to the globin family. As to quaternary structure, heterotetramer of two alpha chains and two beta chains. In terms of tissue distribution, red blood cells.

In terms of biological role, involved in oxygen transport from the lung to the various peripheral tissues. This chain is Hemoglobin subunit beta (HBB), found in Procavia capensis habessinica (Abyssinian hyrax).